Here is a 442-residue protein sequence, read N- to C-terminus: MSDSAGGRAGLRRYPKLPVWVVEDHQEVLPFIYRAIGSKHLPASNISFLHFDSHPDLLIPVNMPADTVFDKETLFGELSIENWIMPAVYAGHFSHVIWFHPAWAQQIREGRHHFLVGKDTSTTTIRVTSTDHYFLSDGLYVPEDQLENQKPLQLDVIMVKPYKLCNNQEENDAVSSAKKPKLALEDSRNTASTNCDSSSEGLEKDTATQRSDQTCLEASCSCSSENQECQTAASTGEILETLKKGKAFVLDIDLDFFSVKNPFKEMFTQEEYKILQELYQFKKPGTNLTEEDLVDIVDTRIHQLEDLEATFADLCDGDDEETVQRWASNPGMESLVPLVQSLKKRMEVPDYEMVHQAGLTCDYSELPHHISTEQEIEYLIQSVHYLLKNLPNPTLVTIARSSLDDYCPSDQVDTIQEKVLNMLRALYGNLDLQVYAAESPPS.

Positions 175 to 208 (SSAKKPKLALEDSRNTASTNCDSSSEGLEKDTAT) are disordered. Positions 189–200 (NTASTNCDSSSE) are enriched in polar residues.

The protein belongs to the UPF0489 family.

The protein is UPF0489 protein C5orf22 homolog of Pongo abelii (Sumatran orangutan).